Here is an 886-residue protein sequence, read N- to C-terminus: Protein O-mannosyltransferase 1 (886 aa).

Composition is skewed to polar residues over residues 1-10 (MSATYTNTIT) and 18-34 (VRQQ…LSGE). 2 disordered regions span residues 1 to 37 (MSAT…ESNE) and 88 to 161 (RGSV…KTAN). Positions 105 to 139 (PTPVATPKQASPSPTSDRSRSLSRSPSPSRSRSLS) are enriched in low complexity. Residues N161 and N242 are each glycosylated (N-linked (GlcNAc...) asparagine). 4 helical membrane passes run 256 to 276 (MPIF…APAV), 310 to 330 (VLME…LLRF), 349 to 369 (VCLG…GLAF), and 398 to 418 (LLIF…IHFK). MIR domains lie at 450-511 (PLAV…VKRP), 522-579 (PDII…VEIL), and 585-642 (GDIW…VEEH). Transmembrane regions (helical) follow at residues 727–747 (ILLW…LAFY), 791–811 (LFLH…CFVV), and 835–855 (LMLI…IPFS).

This sequence belongs to the glycosyltransferase 39 family. As to quaternary structure, interacts with tw/POMT2. At the cellular blastoderm stage, expression accumulates in the ventrally located mesoderm primordium. At germ band extension, mesoderm expression is seen as stripes of strong expression. A very strong signal is also detected in the invaginating gut. As the germ band retracts, mesodermal expression decays and becomes restricted to somatic muscle precursors. After dorsal closure, expression has disappeared from the mesoderm and remains in the endoderm. Some expression is detected in a few cells of the head and the pharyngeal muscles.

The protein resides in the endoplasmic reticulum membrane. The catalysed reaction is a di-trans,poly-cis-dolichyl beta-D-mannosyl phosphate + L-seryl-[protein] = 3-O-(alpha-D-mannosyl)-L-seryl-[protein] + a di-trans,poly-cis-dolichyl phosphate + H(+). The enzyme catalyses a di-trans,poly-cis-dolichyl beta-D-mannosyl phosphate + L-threonyl-[protein] = 3-O-(alpha-D-mannosyl)-L-threonyl-[protein] + a di-trans,poly-cis-dolichyl phosphate + H(+). It participates in protein modification; protein glycosylation. Functionally, rt/POMT1 and tw/POMT2 function as a protein O-mannosyltransferase in association with each other to generate and maintain normal muscle development. This chain is Protein O-mannosyltransferase 1, found in Drosophila melanogaster (Fruit fly).